The sequence spans 91 residues: Small ribosomal subunit protein uS17 (91 aa).

Belongs to the universal ribosomal protein uS17 family. In terms of assembly, part of the 30S ribosomal subunit.

One of the primary rRNA binding proteins, it binds specifically to the 5'-end of 16S ribosomal RNA. This is Small ribosomal subunit protein uS17 from Psychrobacter cryohalolentis (strain ATCC BAA-1226 / DSM 17306 / VKM B-2378 / K5).